A 238-amino-acid polypeptide reads, in one-letter code: 7-cyano-7-deazaguanine synthase 1 (238 aa).

An ATP-binding site is contributed by 14 to 24 (FSGGQDSATCL). Zn(2+)-binding residues include Cys202, Cys217, Cys220, and Cys223.

The protein belongs to the QueC family. Zn(2+) serves as cofactor.

It carries out the reaction 7-carboxy-7-deazaguanine + NH4(+) + ATP = 7-cyano-7-deazaguanine + ADP + phosphate + H2O + H(+). It functions in the pathway purine metabolism; 7-cyano-7-deazaguanine biosynthesis. In terms of biological role, catalyzes the ATP-dependent conversion of 7-carboxy-7-deazaguanine (CDG) to 7-cyano-7-deazaguanine (preQ(0)). This chain is 7-cyano-7-deazaguanine synthase 1, found in Rhodopseudomonas palustris (strain HaA2).